Consider the following 376-residue polypeptide: Chaperone protein DnaJ (376 aa).

The J domain maps to 5 to 70; sequence DYYEVLGLSK…QKKANYDQFG (66 aa). A CR-type zinc finger spans residues 133–215; sequence GVEKEISITR…CHGKGTVRKN (83 aa). The Zn(2+) site is built by cysteine 146, cysteine 149, cysteine 163, cysteine 166, cysteine 189, cysteine 192, cysteine 203, and cysteine 206. CXXCXGXG motif repeat units follow at residues 146 to 153, 163 to 170, 189 to 196, and 203 to 210; these read CDTCAGSG, CDKCGGTG, CDKCGGSG, and CTTCHGKG.

It belongs to the DnaJ family. In terms of assembly, homodimer. The cofactor is Zn(2+).

It is found in the cytoplasm. Its function is as follows. Participates actively in the response to hyperosmotic and heat shock by preventing the aggregation of stress-denatured proteins and by disaggregating proteins, also in an autonomous, DnaK-independent fashion. Unfolded proteins bind initially to DnaJ; upon interaction with the DnaJ-bound protein, DnaK hydrolyzes its bound ATP, resulting in the formation of a stable complex. GrpE releases ADP from DnaK; ATP binding to DnaK triggers the release of the substrate protein, thus completing the reaction cycle. Several rounds of ATP-dependent interactions between DnaJ, DnaK and GrpE are required for fully efficient folding. Also involved, together with DnaK and GrpE, in the DNA replication of plasmids through activation of initiation proteins. In Clostridium novyi (strain NT), this protein is Chaperone protein DnaJ.